The sequence spans 84 residues: Sporulation-specific transcription factor SpoVIF (84 aa).

It localises to the cytoplasm. Its function is as follows. Transcription factor involved in spore coat assembly and spore resistance. Required for gene regulation during the latter stages of sporulation. Regulates the transcription of at least cgeA, cotG and cotS. May directly or indirectly control the function of the GerE protein. The polypeptide is Sporulation-specific transcription factor SpoVIF (Bacillus subtilis (strain 168)).